We begin with the raw amino-acid sequence, 621 residues long: Chaperone protein HscA homolog (621 aa).

Belongs to the heat shock protein 70 family.

In terms of biological role, chaperone involved in the maturation of iron-sulfur cluster-containing proteins. Has a low intrinsic ATPase activity which is markedly stimulated by HscB. The polypeptide is Chaperone protein HscA homolog (Ralstonia nicotianae (strain ATCC BAA-1114 / GMI1000) (Ralstonia solanacearum)).